The chain runs to 440 residues: Probable D-serine dehydratase (440 aa).

K120 is modified (N6-(pyridoxal phosphate)lysine).

The protein belongs to the serine/threonine dehydratase family. DsdA subfamily. Requires pyridoxal 5'-phosphate as cofactor.

The enzyme catalyses D-serine = pyruvate + NH4(+). The protein is Probable D-serine dehydratase of Shouchella clausii (strain KSM-K16) (Alkalihalobacillus clausii).